We begin with the raw amino-acid sequence, 440 residues long: Homocitrate synthase, mitochondrial (440 aa).

The segment covering 1 to 23 (MSENNEFQSVTESTTAPTTSNPY) has biased composition (polar residues). Residues 1–27 (MSENNEFQSVTESTTAPTTSNPYGPNP) form a disordered region. The region spanning 37–290 (FQLIDSTLRE…RSKYKLHKIR (254 aa)) is the Pyruvate carboxyltransferase domain. Residue arginine 45 participates in 2-oxoglutarate binding. Glutamate 46 lines the Mg(2+) pocket. Residues histidine 105, arginine 165, and threonine 199 each contribute to the 2-oxoglutarate site. Mg(2+) contacts are provided by histidine 226 and histidine 228. Histidine 323 functions as the Proton acceptor in the catalytic mechanism. At serine 399 the chain carries Phosphoserine. A Phosphothreonine modification is found at threonine 410.

It belongs to the alpha-IPM synthase/homocitrate synthase family. Homocitrate synthase LYS20/LYS21 subfamily. Mg(2+) serves as cofactor. It depends on Mn(2+) as a cofactor.

It is found in the mitochondrion. The catalysed reaction is acetyl-CoA + 2-oxoglutarate + H2O = (2R)-homocitrate + CoA + H(+). The protein operates within amino-acid biosynthesis; L-lysine biosynthesis via AAA pathway; L-alpha-aminoadipate from 2-oxoglutarate: step 1/5. In terms of biological role, catalyzes the aldol-type condensation of 2-oxoglutarate with acetyl-CoA to yield homocitrate. Carries out the first step of the alpha-aminoadipate (AAA) lysine biosynthesis pathway. The polypeptide is Homocitrate synthase, mitochondrial (LYS21) (Saccharomyces cerevisiae (strain ATCC 204508 / S288c) (Baker's yeast)).